The primary structure comprises 98 residues: NADH-ubiquinone oxidoreductase chain 4L (98 aa).

A run of 3 helical transmembrane segments spans residues 2 to 22, 26 to 46, and 61 to 81; these read TLVM…TLMF, LMST…MAVI, and IIIL…LAMV.

This sequence belongs to the complex I subunit 4L family. In terms of assembly, core subunit of respiratory chain NADH dehydrogenase (Complex I) which is composed of 45 different subunits.

It is found in the mitochondrion inner membrane. The enzyme catalyses a ubiquinone + NADH + 5 H(+)(in) = a ubiquinol + NAD(+) + 4 H(+)(out). Functionally, core subunit of the mitochondrial membrane respiratory chain NADH dehydrogenase (Complex I) which catalyzes electron transfer from NADH through the respiratory chain, using ubiquinone as an electron acceptor. Part of the enzyme membrane arm which is embedded in the lipid bilayer and involved in proton translocation. The polypeptide is NADH-ubiquinone oxidoreductase chain 4L (MT-ND4L) (Nyctomys sumichrasti (Sumichrast's vesper rat)).